We begin with the raw amino-acid sequence, 99 residues long: Large ribosomal subunit protein eL42 (99 aa).

This sequence belongs to the eukaryotic ribosomal protein eL42 family.

In Chlamydomonas reinhardtii (Chlamydomonas smithii), this protein is Large ribosomal subunit protein eL42 (RPL44).